Here is a 390-residue protein sequence, read N- to C-terminus: Nicotinate phosphoribosyltransferase (390 aa).

Phosphohistidine; by autocatalysis is present on His211.

The protein belongs to the NAPRTase family. In terms of processing, transiently phosphorylated on a His residue during the reaction cycle. Phosphorylation strongly increases the affinity for substrates and increases the rate of nicotinate D-ribonucleotide production. Dephosphorylation regenerates the low-affinity form of the enzyme, leading to product release.

It carries out the reaction nicotinate + 5-phospho-alpha-D-ribose 1-diphosphate + ATP + H2O = nicotinate beta-D-ribonucleotide + ADP + phosphate + diphosphate. The protein operates within cofactor biosynthesis; NAD(+) biosynthesis; nicotinate D-ribonucleotide from nicotinate: step 1/1. Catalyzes the synthesis of beta-nicotinate D-ribonucleotide from nicotinate and 5-phospho-D-ribose 1-phosphate at the expense of ATP. The polypeptide is Nicotinate phosphoribosyltransferase (Chromohalobacter salexigens (strain ATCC BAA-138 / DSM 3043 / CIP 106854 / NCIMB 13768 / 1H11)).